An 863-amino-acid polypeptide reads, in one-letter code: Aminopeptidase N (863 aa).

Residues Glu124 and 263–267 each bind substrate; that span reads GAMEN. A Zn(2+)-binding site is contributed by His299. Glu300 functions as the Proton acceptor in the catalytic mechanism. His303 and Glu322 together coordinate Zn(2+).

Belongs to the peptidase M1 family. Requires Zn(2+) as cofactor.

It catalyses the reaction Release of an N-terminal amino acid, Xaa-|-Yaa- from a peptide, amide or arylamide. Xaa is preferably Ala, but may be most amino acids including Pro (slow action). When a terminal hydrophobic residue is followed by a prolyl residue, the two may be released as an intact Xaa-Pro dipeptide.. In terms of biological role, aminopeptidase N is involved in the degradation of intracellular peptides generated by protein breakdown during normal growth as well as in response to nutrient starvation. The chain is Aminopeptidase N (pepN) from Caulobacter vibrioides (strain ATCC 19089 / CIP 103742 / CB 15) (Caulobacter crescentus).